The chain runs to 207 residues: Adenine phosphoribosyltransferase (207 aa).

The interval 1-33 (MRPAKPPQSKERKRSKSLTSADHDNSPQRAETA) is disordered.

This sequence belongs to the purine/pyrimidine phosphoribosyltransferase family. Homodimer.

Its subcellular location is the cytoplasm. The enzyme catalyses AMP + diphosphate = 5-phospho-alpha-D-ribose 1-diphosphate + adenine. Its pathway is purine metabolism; AMP biosynthesis via salvage pathway; AMP from adenine: step 1/1. Catalyzes a salvage reaction resulting in the formation of AMP, that is energically less costly than de novo synthesis. In Corynebacterium jeikeium (strain K411), this protein is Adenine phosphoribosyltransferase.